A 149-amino-acid chain; its full sequence is Transcriptional regulator MraZ (149 aa).

SpoVT-AbrB domains are found at residues 6–52 and 81–124; these read RSHR…PLPD and AELM…DQGR.

This sequence belongs to the MraZ family. Forms oligomers.

It localises to the cytoplasm. Its subcellular location is the nucleoid. In Nitratidesulfovibrio vulgaris (strain DSM 19637 / Miyazaki F) (Desulfovibrio vulgaris), this protein is Transcriptional regulator MraZ.